We begin with the raw amino-acid sequence, 277 residues long: Thiazole synthase (277 aa).

K107 acts as the Schiff-base intermediate with DXP in catalysis. Residues G168, 194–195 (AG), and 216–217 (AS) each bind 1-deoxy-D-xylulose 5-phosphate.

The protein belongs to the ThiG family. As to quaternary structure, homotetramer. Forms heterodimers with either ThiH or ThiS.

It is found in the cytoplasm. The catalysed reaction is [ThiS sulfur-carrier protein]-C-terminal-Gly-aminoethanethioate + 2-iminoacetate + 1-deoxy-D-xylulose 5-phosphate = [ThiS sulfur-carrier protein]-C-terminal Gly-Gly + 2-[(2R,5Z)-2-carboxy-4-methylthiazol-5(2H)-ylidene]ethyl phosphate + 2 H2O + H(+). The protein operates within cofactor biosynthesis; thiamine diphosphate biosynthesis. Catalyzes the rearrangement of 1-deoxy-D-xylulose 5-phosphate (DXP) to produce the thiazole phosphate moiety of thiamine. Sulfur is provided by the thiocarboxylate moiety of the carrier protein ThiS. In vitro, sulfur can be provided by H(2)S. The polypeptide is Thiazole synthase (Cutibacterium acnes (strain DSM 16379 / KPA171202) (Propionibacterium acnes)).